The primary structure comprises 90 residues: Defensin-like protein 178 (90 aa).

The signal sequence occupies residues 1-23 (MAKATSSLVVPIIFLVIFALVEQ). Disulfide bonds link cysteine 27–cysteine 66, cysteine 36–cysteine 55, cysteine 39–cysteine 60, and cysteine 43–cysteine 62.

Belongs to the DEFL family.

It localises to the secreted. The sequence is that of Defensin-like protein 178 (LCR64) from Arabidopsis thaliana (Mouse-ear cress).